Consider the following 418-residue polypeptide: Nickel and cobalt resistance protein CnrC (418 aa).

An N-terminal signal peptide occupies residues M1–A29.

This sequence belongs to the outer membrane factor (OMF) (TC 1.B.17) family.

The products of the genes cnrA, cnrB, and cnrC are likely to form a membrane-bound protein complex catalyzing an energy-dependent efflux of Ni(2+) and Co(2+). The mechanism of action of the CnrCBA complex may be that of a proton/cation antiporter. In Cupriavidus metallidurans (strain ATCC 43123 / DSM 2839 / NBRC 102507 / CH34) (Ralstonia metallidurans), this protein is Nickel and cobalt resistance protein CnrC (cnrC).